The primary structure comprises 60 residues: Large ribosomal subunit protein bL32 (60 aa).

The protein belongs to the bacterial ribosomal protein bL32 family.

In Moorella thermoacetica (strain ATCC 39073 / JCM 9320), this protein is Large ribosomal subunit protein bL32.